The sequence spans 224 residues: Large ribosomal subunit protein uL3 (224 aa).

Q159 bears the N5-methylglutamine mark.

The protein belongs to the universal ribosomal protein uL3 family. Part of the 50S ribosomal subunit. Forms a cluster with proteins L14 and L19. In terms of processing, methylated by PrmB.

In terms of biological role, one of the primary rRNA binding proteins, it binds directly near the 3'-end of the 23S rRNA, where it nucleates assembly of the 50S subunit. This is Large ribosomal subunit protein uL3 from Herminiimonas arsenicoxydans.